A 697-amino-acid chain; its full sequence is MANALRRFTEYAPANPDLMVALMLLLAVSMMVMPIPVMAVDALIGFNMGLAVLLLMAALYVSTPLDFSSLPGVILLSTVFRLALTVATTRLILAEGEAGSIIHTFGSFVISGNIVVGFVIFLVVTMVQFMVLAKGAERVAEVAARFTLDALPGKQMAIDAELRNGHIDADESRRRRAALEKESKLYGAMDGAMKFVKGDSIAGLVVICINMLGGISIGLLSKGMSFAQVLHHYTLLTIGDALISQIPALLLSITAATMVTRVTGASKLNLGEDIANQLTASTRALRLAACVLVAMGFVPGFPLPVFFMLAAVFAAASFVKGDVLDADKVDATTVTPAESQTPNVAAQPNPIGVFLAPSLTNAIDQVELRQHIARISQLVSADLGIIVPPIPVDVDQQLPESQFRIDVEGVPVEQDLINPAQLSLADDLKKIESSGIPFRHDPETHRIWVEQSHEPALKAAGIRHHSPSELLAMRVHATLTCHAPRLVGIQETRQLLGRMEQEYSDLVKEVLRTTPIPRIADVLRRLLGEGIPIRNTRLVLEALAEWSEREQNVALLTEHVRSGMKRQICHRYGRHGVLPAFVMERETEDVVRCAVRETAAGPYLALEDRQSEALLSQMRQVFSSTAPGQTRPIVLTSMDVRRFVRGFLTRNGIELAVLSYQDLASDFKIQPVGSIRLPPSNGTSGEPRSIRPSATTG.

A run of 8 helical transmembrane segments spans residues valine 20–valine 40, alanine 42–serine 62, phenylalanine 67–alanine 87, serine 107–valine 127, serine 200–leucine 220, leucine 235–alanine 255, valine 293–phenylalanine 313, and isoleucine 372–valine 392. A disordered region spans residues isoleucine 675–glycine 697. Residues serine 680–glycine 697 show a composition bias toward polar residues.

Belongs to the FHIPEP (flagella/HR/invasion proteins export pore) family.

It is found in the cell inner membrane. Functionally, could be involved in the secretion of an unknown factor. In Sinorhizobium fredii (strain NBRC 101917 / NGR234), this protein is Probable translocation protein y4yR.